The sequence spans 804 residues: Mechanosensitive cation channel TMEM63A (804 aa).

The Extracellular segment spans residues 1–51; the sequence is MTSSPFLDPWPSKAVFVRERLGLGERPNDSYCYNSAKNSTVLQGVTFGGIP. An N-linked (GlcNAc...) asparagine glycan is attached at asparagine 38. Residues 52 to 74 form a helical membrane-spanning segment; sequence TVLLLDVSCFLFLILVFSIIRRR. Residues 75–133 lie on the Cytoplasmic side of the membrane; that stretch reads FWDYGRIALVSEAGSEARFQRLSSSSSGQQDFENELGCCPWLTAIFRLHDDQILEWCGE. A helical transmembrane segment spans residues 134–166; that stretch reads DAIHYLSFQRHIIFLLVVISFLSLCVILPVNLS. Over 167 to 190 the chain is Extracellular; the sequence is GDLLGKDPYSFGRTTIANLQTDND. The helical transmembrane segment at 191–216 threads the bilayer; that stretch reads LLWLHTVFSVIYLFLTVGFMWHHTRS. Over 217 to 415 the chain is Cytoplasmic; that stretch reads IRYKEESLVR…CWKNLSIQGV (199 aa). Residues 218–413 are intracellular linker IL2; confers mechanosensitivity; the sequence is RYKEESLVRQ…DICWKNLSIQ (196 aa). Residues 416–443 traverse the membrane as a helical segment; the sequence is RWWLQWLGINFSLFVVLFFLTTPSIIMS. Residues 444-461 are Extracellular-facing; sequence TMDKFNVTKPIHALNNPV. Asparagine 449 is a glycosylation site (N-linked (GlcNAc...) asparagine). Residues 462-489 traverse the membrane as a helical segment; sequence ISQFFPTLLLWSFSALLPSIVYYSTLLE. Residues 490-494 are Cytoplasmic-facing; sequence SHWTR. Residues 495-531 form a helical membrane-spanning segment; it reads SGENRIMVSKVYIFLIFMVLILPSLGLTSLDFFFRWL. The Extracellular segment spans residues 532-553; that stretch reads FDKTSSETSIRLECVFLPDQGA. The helical transmembrane segment at 554–585 threads the bilayer; the sequence is FFVNYVIASAFIGSGMELLRLPGLILYTFRMI. The segment at 554–585 is gating helix; sequence FFVNYVIASAFIGSGMELLRLPGLILYTFRMI. The Cytoplasmic portion of the chain corresponds to 586–605; sequence MAKTAADRRNVKQNQAFEYE. A helical membrane pass occupies residues 606 to 623; sequence FGAMYAWMLCVFTVIMAY. The Extracellular portion of the chain corresponds to 624–627; sequence SITC. A helical membrane pass occupies residues 628 to 650; sequence PIIVPFGLIYILLKHMVDRHNLY. Residues 651–660 are Cytoplasmic-facing; that stretch reads FAYLPAKLEK. The chain crosses the membrane as a helical span at residues 661-688; it reads RIHFAAVNQALAAPILCLFWLFFFSFLR. Residues 689–693 are Extracellular-facing; it reads LGLTA. The chain crosses the membrane as a helical span at residues 694–708; that stretch reads PATLFTFLVVLLTIL. Topologically, residues 709–804 are cytoplasmic; that stretch reads ACLLYTCFGC…GTAAYAYQES (96 aa). Serine 738 bears the Phosphoserine mark.

Belongs to the CSC1 (TC 1.A.17) family. Monomer. Post-translationally, N-Glycosylated.

Its subcellular location is the lysosome membrane. It localises to the early endosome membrane. The protein localises to the cell membrane. The catalysed reaction is Ca(2+)(in) = Ca(2+)(out). Functionally, mechanosensitive cation channel with low conductance and high activation threshold. In contrast to TMEM63B, does not show phospholipid scramblase activity. Acts as a regulator of lysosomal morphology by mediating lysosomal mechanosensitivity. Important for the baby's first breath and respiration throughout life. Upon lung inflation conducts cation currents in alveolar type 1 and 2 cells triggering lamellar body exocytosis and surfactant secretion into airspace. Also acts as an osmosensitive cation channel preferentially activated by hypotonic stress. The chain is Mechanosensitive cation channel TMEM63A from Mus musculus (Mouse).